A 347-amino-acid chain; its full sequence is UDP-3-O-acylglucosamine N-acyltransferase (347 aa).

His248 functions as the Proton acceptor in the catalytic mechanism.

Belongs to the transferase hexapeptide repeat family. LpxD subfamily. In terms of assembly, homotrimer.

The catalysed reaction is a UDP-3-O-[(3R)-3-hydroxyacyl]-alpha-D-glucosamine + a (3R)-hydroxyacyl-[ACP] = a UDP-2-N,3-O-bis[(3R)-3-hydroxyacyl]-alpha-D-glucosamine + holo-[ACP] + H(+). It participates in bacterial outer membrane biogenesis; LPS lipid A biosynthesis. Functionally, catalyzes the N-acylation of UDP-3-O-acylglucosamine using 3-hydroxyacyl-ACP as the acyl donor. Is involved in the biosynthesis of lipid A, a phosphorylated glycolipid that anchors the lipopolysaccharide to the outer membrane of the cell. In Synechococcus sp. (strain CC9902), this protein is UDP-3-O-acylglucosamine N-acyltransferase.